A 447-amino-acid polypeptide reads, in one-letter code: Putative bacteriocin-SkfA transport system permease protein SkfF (447 aa).

Residues 1–3 (MPF) lie on the Cytoplasmic side of the membrane. Residues 4-22 (LIMLLFVGAIGFQVSFVSR) traverse the membrane as a helical segment. Residues 23–29 (STTWDMS) are Extracellular-facing. The helical transmembrane segment at 30 to 50 (IAGWVLTGVFILYTAFGLFSN) threads the bilayer. Residues 51–59 (RLPSQMADI) are Cytoplasmic-facing. A helical membrane pass occupies residues 60–80 (IWLYGTATSFSKVVYSVLFFS). Residues 81–85 (VTWKA) lie on the Extracellular side of the membrane. The chain crosses the membrane as a helical span at residues 86–104 (LLWIISAIFGDVLIVLLSG). Topologically, residues 105–113 (DHINLLGRS) are cytoplasmic. A helical membrane pass occupies residues 114–134 (IIFVGLFFIAEVWLMSVSCAR). Residues 135–141 (TVKKMKR) are Extracellular-facing. Residues 142–160 (VYVLVFLLMLGIYSICLYR) form a helical membrane-spanning segment. The Cytoplasmic portion of the chain corresponds to 161-189 (FFFLQHSSGIWESIARFISGVGLVFDTLS). The helical transmembrane segment at 190–208 (PLYVVVFIGIITVSFMTIA) threads the bilayer. Over 209 to 247 (FTSRQVEMKESLVKEAEFWEEFQERQFGSGQIIQKPKTT) the chain is Extracellular. A helical membrane pass occupies residues 248–268 (WWGLQGLNGIWSFLWLELLLF). Residues 269–297 (KKYLFFHSIHTVMLSGVFYVVIFMYPEWF) lie on the Cytoplasmic side of the membrane. A helical membrane pass occupies residues 298 to 318 (YLLFFLIVSAVMLSSYYSGIV). The Extracellular portion of the chain corresponds to 319–341 (RHSQSGTLHLFPGALWKKIIILE). Residues 342 to 360 (LTNTVWLYILYCVSITFMA) form a helical membrane-spanning segment. At 361 to 363 (VGN) the chain is on the cytoplasmic side. Residues 364–382 (LVYWYIYGLGIYIWFMTIR) form a helical membrane-spanning segment. Over 383-404 (LFAFTHTNRNDIKLSLPQYYKS) the chain is Extracellular. A helical transmembrane segment spans residues 405-423 (FFMALGLSGICLYVIHLLT). Over 424–426 (ADW) the chain is Cytoplasmic. Residues 427-447 (YTLVVVVCIGSLSWCLFYRFR) form a helical membrane-spanning segment.

Its subcellular location is the cell membrane. Functionally, probably part of the ABC transporter SkfEF involved in the export of the bacteriocin SKF. Probably responsible for the translocation of bacteriocin SkfA across the membrane. This is Putative bacteriocin-SkfA transport system permease protein SkfF from Bacillus subtilis (strain 168).